A 452-amino-acid chain; its full sequence is Tylactone mycaminosyltransferase (452 aa).

Basic and acidic residues predominate over residues 1–16 (MRRALDDRRRGPHGPE). The disordered stretch occupies residues 1–20 (MRRALDDRRRGPHGPEGKPP).

The protein belongs to the glycosyltransferase 28 family.

It carries out the reaction tylactone + dTDP-alpha-D-mycaminose = 5-O-beta-D-mycaminosyltylactone + dTDP + H(+). The protein operates within antibiotic biosynthesis; tylosin biosynthesis. With respect to regulation, the activity of TylM2 is substantially increased by the addition of the accessory protein TylM3. Functionally, involved in the biosynthesis of the macrolide antibiotic tylosin derived from the polyketide lactone tylactone. Catalyzes the transfer of alpha-D-mycaminosyl from dTDP-alpha-D-mycaminose to the 5-hydroxyl group of tylactone to yield 5-O-mycaminosytylactone. It can also accept 16-membered tylactone and 12-membered ring macrolide. The chain is Tylactone mycaminosyltransferase from Streptomyces fradiae (Streptomyces roseoflavus).